A 115-amino-acid chain; its full sequence is U3-lycotoxin-Ls1i (115 aa).

Residues 1–20 form the signal peptide; it reads MKFVLLFGVFLVTLFSYSSA. A propeptide spanning residues 21-44 is cleaved from the precursor; it reads EMLDDFDQADEDELLSLIEKEEAR. 4 disulfide bridges follow: C48–C63, C55–C72, C62–C87, and C74–C85.

The protein belongs to the neurotoxin 19 (CSTX) family. 01 subfamily. Expressed by the venom gland.

It is found in the secreted. This is U3-lycotoxin-Ls1i from Lycosa singoriensis (Wolf spider).